The following is a 446-amino-acid chain: Fatty acid desaturase 2 (446 aa).

Over 1–132 (MGMGGQSGEG…EDMRLFKSNP (132 aa)) the chain is Cytoplasmic. The 78-residue stretch at 20–97 (EAQYSWEEIQ…LKPLYIGELA (78 aa)) folds into the Cytochrome b5 heme-binding domain. Residues 133–153 (AFFIFYLFHILLIEFLAWCTL) traverse the membrane as a helical segment. A topological domain (lumenal) is located at residue histidine 154. The helical transmembrane segment at 155–175 (YLGTGWIPAIITVLLLTISQA) threads the bilayer. The Cytoplasmic segment spans residues 176-265 (QAGWLQHDFG…IKYLPYNHQH (90 aa)). The short motif at 182-186 (HDFGH) is the Histidine box-1 element. Positions 219-223 (HFQHH) match the Histidine box-2 motif. A helical transmembrane segment spans residues 266–286 (LYFFLIGPPLLIPVYFTVQII). Residues 287 to 307 (KTMIARKDWVDLAWSVSYYVR) are Lumenal-facing. Residues 308-328 (FFFTFVPFFGVLGSLALLNAV) traverse the membrane as a helical segment. Residues 329–446 (RFFESHWFVW…QLWLDAYLHK (118 aa)) are Cytoplasmic-facing. Positions 384–388 (QIEHH) match the Histidine box-3 motif.

The protein belongs to the fatty acid desaturase type 1 family.

The protein resides in the endoplasmic reticulum membrane. It participates in lipid metabolism; polyunsaturated fatty acid biosynthesis. Its function is as follows. Component of a lipid metabolic pathway that catalyzes biosynthesis of highly unsaturated fatty acids (HUFA) from precursor essential polyunsaturated fatty acids (PUFA) linoleic acid (LA) (18:2n-6) and alpha-linolenic acid (ALA) (18:3n-3). Catalyzes the first and rate limiting step in this pathway which is the desaturation of LA (18:2n-6) and ALA (18:3n-3) into gamma-linoleic acid (GLA) (18:3n-6) and stearidonic acid (18:4n-3) respectively and other desaturation steps. Highly unsaturated fatty acids (HUFA) play pivotal roles in many biological functions. This Xenopus laevis (African clawed frog) protein is Fatty acid desaturase 2 (fads2).